The sequence spans 262 residues: Acyl-[acyl-carrier-protein]--UDP-N-acetylglucosamine O-acyltransferase (262 aa).

Belongs to the transferase hexapeptide repeat family. LpxA subfamily. Homotrimer.

The protein resides in the cytoplasm. The enzyme catalyses a (3R)-hydroxyacyl-[ACP] + UDP-N-acetyl-alpha-D-glucosamine = a UDP-3-O-[(3R)-3-hydroxyacyl]-N-acetyl-alpha-D-glucosamine + holo-[ACP]. The protein operates within glycolipid biosynthesis; lipid IV(A) biosynthesis; lipid IV(A) from (3R)-3-hydroxytetradecanoyl-[acyl-carrier-protein] and UDP-N-acetyl-alpha-D-glucosamine: step 1/6. Functionally, involved in the biosynthesis of lipid A, a phosphorylated glycolipid that anchors the lipopolysaccharide to the outer membrane of the cell. This Klebsiella pneumoniae (strain 342) protein is Acyl-[acyl-carrier-protein]--UDP-N-acetylglucosamine O-acyltransferase.